We begin with the raw amino-acid sequence, 329 residues long: Mas-related G-protein coupled receptor member X2 (329 aa).

The Extracellular segment spans residues 1–33; it reads MDPTTPAWRTESTTMNGNDQALPLLCGKEILIS. Residues 34–54 form a helical membrane-spanning segment; the sequence is VFLILFIALVGLVGNGFVLWL. Residues 55-63 are Cytoplasmic-facing; the sequence is LGFRMRRNA. Residues 64 to 84 form a helical membrane-spanning segment; it reads FSVYVLSLAGADFLFLCFQII. Residues 85–96 lie on the Extracellular side of the membrane; the sequence is NCLVYLSNFFCS. Residues 97–117 form a helical membrane-spanning segment; that stretch reads SSINFPSFFTTVMTCAYLAGL. At 118–144 the chain is on the cytoplasmic side; sequence SMLSTISTERCLSVLWPIWYRCRRPRH. A helical membrane pass occupies residues 145–165; that stretch reads LSAVACVLLWALSLLLSILEG. Over 166-183 the chain is Extracellular; sequence KFCGLFGDGDSGWCQTFD. A helical membrane pass occupies residues 184–204; the sequence is LITAAWLIFLFMVLCGSSLAL. At 205–227 the chain is on the cytoplasmic side; sequence LVRILCGSRGLPLTRLYLTILLT. A helical membrane pass occupies residues 228-248; the sequence is VLVFLLCGLPFGIQWFLILWI. Topologically, residues 249–263 are extracellular; sequence WKNSDVLFCHIHPVS. A helical transmembrane segment spans residues 264–284; sequence VVLSSLNSSANPIIYFFVGSF. The Cytoplasmic segment spans residues 285-329; that stretch reads RKQWQLQQPILKLALQRALQDIAEVDHSEGCFRQGTPEMSRSSLV.

Belongs to the G-protein coupled receptor 1 family. Mas subfamily.

The protein localises to the cell membrane. Functionally, mast cell-specific receptor for basic secretagogues, i.e. cationic amphiphilic drugs, as well as endo- or exogenous peptides, consisting of a basic head group and a hydrophobic core. Recognizes and binds small molecules containing a cyclized tetrahydroisoquinoline (THIQ), such as non-steroidal neuromuscular blocking drugs (NMBDs), including tubocurarine and atracurium. In response to these compounds, mediates pseudo-allergic reactions characterized by histamine release, inflammation and airway contraction. The chain is Mas-related G-protein coupled receptor member X2 (MRGPRX2) from Gorilla gorilla gorilla (Western lowland gorilla).